A 328-amino-acid chain; its full sequence is Cytochrome c biogenesis protein CcsA (328 aa).

8 helical membrane-spanning segments follow: residues 13–33 (ISFSVVSIVLTIYFLTLLVNL), 46–66 (GIIITFFGITGLLLTRWIYSG), 73–93 (LYESLIFLSWAFSIIHMVSYF), 101–121 (LNTITAPSVIFIQGFATSGLL), 146–166 (MILGYGALLCGSLLSIALLVI), 234–254 (IISLGFIFLTVGILSGAVWAN), 263–283 (WDPKETWAFITWTIFAIYLHI), and 295–315 (AIVALIGFILIWICYFGVNLL).

The protein belongs to the CcmF/CycK/Ccl1/NrfE/CcsA family. As to quaternary structure, may interact with Ccs1.

The protein resides in the plastid. The protein localises to the chloroplast thylakoid membrane. In terms of biological role, required during biogenesis of c-type cytochromes (cytochrome c6 and cytochrome f) at the step of heme attachment. The chain is Cytochrome c biogenesis protein CcsA from Arabidopsis thaliana (Mouse-ear cress).